The following is a 262-amino-acid chain: Pyridoxine 5'-phosphate synthase (262 aa).

Residue Asn6 coordinates 3-amino-2-oxopropyl phosphate. 8-9 (DH) contacts 1-deoxy-D-xylulose 5-phosphate. 3-amino-2-oxopropyl phosphate is bound at residue Arg17. Residue His42 is the Proton acceptor of the active site. 1-deoxy-D-xylulose 5-phosphate contacts are provided by Arg44 and His49. Residue Glu69 is the Proton acceptor of the active site. 1-deoxy-D-xylulose 5-phosphate is bound at residue Thr99. His213 acts as the Proton donor in catalysis. Residues Gly214 and 235–236 (GH) contribute to the 3-amino-2-oxopropyl phosphate site.

The protein belongs to the PNP synthase family. As to quaternary structure, homooctamer; tetramer of dimers.

It localises to the cytoplasm. The catalysed reaction is 3-amino-2-oxopropyl phosphate + 1-deoxy-D-xylulose 5-phosphate = pyridoxine 5'-phosphate + phosphate + 2 H2O + H(+). It participates in cofactor biosynthesis; pyridoxine 5'-phosphate biosynthesis; pyridoxine 5'-phosphate from D-erythrose 4-phosphate: step 5/5. Its function is as follows. Catalyzes the complicated ring closure reaction between the two acyclic compounds 1-deoxy-D-xylulose-5-phosphate (DXP) and 3-amino-2-oxopropyl phosphate (1-amino-acetone-3-phosphate or AAP) to form pyridoxine 5'-phosphate (PNP) and inorganic phosphate. The protein is Pyridoxine 5'-phosphate synthase of Wolinella succinogenes (strain ATCC 29543 / DSM 1740 / CCUG 13145 / JCM 31913 / LMG 7466 / NCTC 11488 / FDC 602W) (Vibrio succinogenes).